A 919-amino-acid chain; its full sequence is MFS-type transporter clz9 (919 aa).

Over residues 1-11 (MAASTKPTTKL) the composition is skewed to polar residues. A disordered region spans residues 1-33 (MAASTKPTTKLSTEEDDVSRRDSESSADFMKSN). A helical transmembrane segment spans residues 69-89 (VVASFAAAISPFSTSTYYPVV). N-linked (GlcNAc...) asparagine glycosylation occurs at N104. The next 3 helical transmembrane spans lie at 132–152 (PMFL…ALQN), 192–212 (LIYA…IGGL), and 222–242 (VFWF…IFFG). N-linked (GlcNAc...) asparagine glycosylation is present at N260. 4 helical membrane passes run 303-323 (FILS…TSVL), 333-353 (YDAV…LLAY), 393-413 (LGFV…YGWQ), and 418-438 (APLA…TGVM). N461 is a glycosylation site (N-linked (GlcNAc...) asparagine). A helical membrane pass occupies residues 465–485 (LLLGAGAVAVVGPLNKSAGIG). One can recognise a DDE-1 domain in the interval 641-809 (REWVTLIQGI…FTSANICSSF (169 aa)). The interval 840 to 897 (EAPWEAKTPSNRKKKQIQKRGTLTKGEGEDTLAQKEADQQIEREQRQGGEQSGRSRQA) is disordered. The segment covering 865 to 886 (GEGEDTLAQKEADQQIEREQRQ) has biased composition (basic and acidic residues). Residues 887–896 (GGEQSGRSRQ) show a composition bias toward low complexity. N915 is a glycosylation site (N-linked (GlcNAc...) asparagine).

It belongs to the major facilitator superfamily. CAR1 family.

The protein localises to the membrane. Functionally, MFS-type transporter; part of the gene cluster that mediates the biosynthesis of squalestatin S1 (SQS1, also known as zaragozic acid A), a heavily oxidized fungal polyketide that offers potent cholesterol lowering activity by targeting squalene synthase (SS). This is MFS-type transporter clz9 from Cochliobolus lunatus (Filamentous fungus).